The chain runs to 612 residues: Glutamine--fructose-6-phosphate aminotransferase [isomerizing] (612 aa).

C2 serves as the catalytic Nucleophile; for GATase activity. The Glutamine amidotransferase type-2 domain occupies 2–220; it reads CGIVGAIRAH…DGDIALLASD (219 aa). SIS domains follow at residues 288-428 and 461-602; these read AKSV…VRGL and WAQQ…VDKP. K607 functions as the For Fru-6P isomerization activity in the catalytic mechanism.

As to quaternary structure, homodimer.

The protein resides in the cytoplasm. It carries out the reaction D-fructose 6-phosphate + L-glutamine = D-glucosamine 6-phosphate + L-glutamate. Functionally, catalyzes the first step in hexosamine metabolism, converting fructose-6P into glucosamine-6P using glutamine as a nitrogen source. This chain is Glutamine--fructose-6-phosphate aminotransferase [isomerizing], found in Neisseria meningitidis serogroup B (strain ATCC BAA-335 / MC58).